Reading from the N-terminus, the 150-residue chain is D-aminoacyl-tRNA deacylase (150 aa).

The Gly-cisPro motif, important for rejection of L-amino acids motif lies at 138-139; it reads GP.

This sequence belongs to the DTD family. Homodimer.

Its subcellular location is the cytoplasm. The catalysed reaction is glycyl-tRNA(Ala) + H2O = tRNA(Ala) + glycine + H(+). It catalyses the reaction a D-aminoacyl-tRNA + H2O = a tRNA + a D-alpha-amino acid + H(+). Its function is as follows. An aminoacyl-tRNA editing enzyme that deacylates mischarged D-aminoacyl-tRNAs. Also deacylates mischarged glycyl-tRNA(Ala), protecting cells against glycine mischarging by AlaRS. Acts via tRNA-based rather than protein-based catalysis; rejects L-amino acids rather than detecting D-amino acids in the active site. By recycling D-aminoacyl-tRNA to D-amino acids and free tRNA molecules, this enzyme counteracts the toxicity associated with the formation of D-aminoacyl-tRNA entities in vivo and helps enforce protein L-homochirality. The protein is D-aminoacyl-tRNA deacylase of Chlorobium phaeobacteroides (strain DSM 266 / SMG 266 / 2430).